The primary structure comprises 423 residues: MTAKFVVRGGNRLSGTVTIGGAKNSALPIVTAAALAAEGESILENVPDNSDIQHLCEILRALGCRVERVAETTLRIQARELEHHVAPYHLARRLRGSTYVMGLLLARLGKGEVACPGGCEIGARPVDFHLKGFRALGAEVVVEHGAMVSRRVDLRGGRFYVDRASVGTTVNMIITASLAPGVTVLENAACEPEIVDLANFINAMGGRVRGAGTNTVRIEGVDRLRGARHEIIPDRIEAGTYMMMTAAAGGDVVVENVIPEHLGTVIAKLVEAGQEVEEHGDCIRVRARPIRAVDVETQVYPGFPTDLQSPWVALMGLADGISVVHETIFENRFGFTNELIRMGAKIKVDRNTGIIRGVKRYTGAPVEARDIRGGAALVTAALAAEGVTEVSGVQYIDRGYTRMEEKLAALGADIRRVPNGSEQ.

23–24 (KN) is a binding site for phosphoenolpyruvate. R95 is a UDP-N-acetyl-alpha-D-glucosamine binding site. Residue C119 is the Proton donor of the active site. Position 119 is a 2-(S-cysteinyl)pyruvic acid O-phosphothioketal (C119). UDP-N-acetyl-alpha-D-glucosamine contacts are provided by D306 and I328.

The protein belongs to the EPSP synthase family. MurA subfamily.

The protein localises to the cytoplasm. The enzyme catalyses phosphoenolpyruvate + UDP-N-acetyl-alpha-D-glucosamine = UDP-N-acetyl-3-O-(1-carboxyvinyl)-alpha-D-glucosamine + phosphate. It participates in cell wall biogenesis; peptidoglycan biosynthesis. In terms of biological role, cell wall formation. Adds enolpyruvyl to UDP-N-acetylglucosamine. The polypeptide is UDP-N-acetylglucosamine 1-carboxyvinyltransferase 2 (Symbiobacterium thermophilum (strain DSM 24528 / JCM 14929 / IAM 14863 / T)).